A 167-amino-acid polypeptide reads, in one-letter code: Endothelin-3 (167 aa).

Positions 1 to 19 are cleaved as a signal peptide; the sequence is MELGLWLLLGLTVTSAAAA. The propeptide occupies 20–50; that stretch reads LPAQPGNAGQERGPGRSGDQEEKRVPAHHRP. A disordered region spans residues 22–45; that stretch reads AQPGNAGQERGPGRSGDQEEKRVP. 2 disulfides stabilise this stretch: Cys53–Cys67 and Cys55–Cys63. The propeptide occupies 74 to 167; the sequence is INTPEQTVPY…KSRTDKVHQP (94 aa). Residues 85–112 are disordered; it reads LSNHRGSLRGKRSSGPVPESSQSSPQTR. Residues 97–109 show a composition bias toward low complexity; the sequence is SSGPVPESSQSSP. Positions 115–135 are endothelin-like; it reads CACSGVDDKACAYFCAHVTSY. A compositionally biased stretch (basic and acidic residues) spans 140 to 149; the sequence is EKAAAEEKQE. The disordered stretch occupies residues 140–167; it reads EKAAAEEKQETGGPRQRLKSRTDKVHQP.

This sequence belongs to the endothelin/sarafotoxin family.

Its subcellular location is the secreted. Endothelins are endothelium-derived vasoconstrictor peptides. The protein is Endothelin-3 (Edn3) of Rattus norvegicus (Rat).